The following is a 344-amino-acid chain: tRNA N6-adenosine threonylcarbamoyltransferase (344 aa).

Fe cation is bound by residues His111 and His115. Substrate is bound by residues 134–138 (LVSGG), Asp167, Gly180, and Asn274. Position 302 (Asp302) interacts with Fe cation.

Belongs to the KAE1 / TsaD family. Fe(2+) serves as cofactor.

The protein resides in the cytoplasm. The enzyme catalyses L-threonylcarbamoyladenylate + adenosine(37) in tRNA = N(6)-L-threonylcarbamoyladenosine(37) in tRNA + AMP + H(+). In terms of biological role, required for the formation of a threonylcarbamoyl group on adenosine at position 37 (t(6)A37) in tRNAs that read codons beginning with adenine. Is involved in the transfer of the threonylcarbamoyl moiety of threonylcarbamoyl-AMP (TC-AMP) to the N6 group of A37, together with TsaE and TsaB. TsaD likely plays a direct catalytic role in this reaction. The sequence is that of tRNA N6-adenosine threonylcarbamoyltransferase from Dechloromonas aromatica (strain RCB).